The following is a 302-amino-acid chain: Sulfate adenylyltransferase subunit 2 (302 aa).

It belongs to the PAPS reductase family. CysD subfamily. Heterodimer composed of CysD, the smaller subunit, and CysN.

The catalysed reaction is sulfate + ATP + H(+) = adenosine 5'-phosphosulfate + diphosphate. The protein operates within sulfur metabolism; hydrogen sulfide biosynthesis; sulfite from sulfate: step 1/3. In terms of biological role, with CysN forms the ATP sulfurylase (ATPS) that catalyzes the adenylation of sulfate producing adenosine 5'-phosphosulfate (APS) and diphosphate, the first enzymatic step in sulfur assimilation pathway. APS synthesis involves the formation of a high-energy phosphoric-sulfuric acid anhydride bond driven by GTP hydrolysis by CysN coupled to ATP hydrolysis by CysD. The protein is Sulfate adenylyltransferase subunit 2 of Yersinia pestis bv. Antiqua (strain Nepal516).